We begin with the raw amino-acid sequence, 125 residues long: Glycine cleavage system H protein (125 aa).

The region spanning 19–101 (GAVVGITDFA…NGSGWFFKLT (83 aa)) is the Lipoyl-binding domain. At K60 the chain carries N6-lipoyllysine.

It belongs to the GcvH family. The glycine cleavage system is composed of four proteins: P, T, L and H. The cofactor is (R)-lipoate.

Its function is as follows. The glycine cleavage system catalyzes the degradation of glycine. The H protein shuttles the methylamine group of glycine from the P protein to the T protein. The protein is Glycine cleavage system H protein of Methylocella silvestris (strain DSM 15510 / CIP 108128 / LMG 27833 / NCIMB 13906 / BL2).